The chain runs to 926 residues: LPS-assembly protein LptD (926 aa).

Residues 1-22 (MALKSPAFRKKFPLLVTGSLLA) form the signal peptide. Positions 55–91 (AAAVDLPPRPVHDTTSVSSNGTVTSQGTSSGEQSAGT) are disordered. Low complexity predominate over residues 68–91 (TTSVSSNGTVTSQGTSSGEQSAGT).

This sequence belongs to the LptD family. In terms of assembly, component of the lipopolysaccharide transport and assembly complex. Interacts with LptE and LptA.

Its subcellular location is the cell outer membrane. Functionally, together with LptE, is involved in the assembly of lipopolysaccharide (LPS) at the surface of the outer membrane. This is LPS-assembly protein LptD from Pseudomonas syringae pv. syringae (strain B728a).